We begin with the raw amino-acid sequence, 194 residues long: Ribonuclease HII (194 aa).

Positions 3-193 (ILTAGVDEAG…VRNLFAQQAL (191 aa)) constitute an RNase H type-2 domain. Asp9, Glu10, and Asp101 together coordinate a divalent metal cation.

The protein belongs to the RNase HII family. Requires Mn(2+) as cofactor. Mg(2+) is required as a cofactor.

Its subcellular location is the cytoplasm. The enzyme catalyses Endonucleolytic cleavage to 5'-phosphomonoester.. In terms of biological role, endonuclease that specifically degrades the RNA of RNA-DNA hybrids. In Neisseria meningitidis serogroup C / serotype 2a (strain ATCC 700532 / DSM 15464 / FAM18), this protein is Ribonuclease HII.